A 434-amino-acid chain; its full sequence is Chaperone SurA (434 aa).

A signal peptide spans Met-1 to Ala-22. 2 consecutive PpiC domains span residues Asp-173–Asp-274 and Ile-283–Glu-383.

It is found in the periplasm. The catalysed reaction is [protein]-peptidylproline (omega=180) = [protein]-peptidylproline (omega=0). In terms of biological role, chaperone involved in the correct folding and assembly of outer membrane proteins. Recognizes specific patterns of aromatic residues and the orientation of their side chains, which are found more frequently in integral outer membrane proteins. May act in both early periplasmic and late outer membrane-associated steps of protein maturation. The polypeptide is Chaperone SurA (Shewanella oneidensis (strain ATCC 700550 / JCM 31522 / CIP 106686 / LMG 19005 / NCIMB 14063 / MR-1)).